The sequence spans 139 residues: Peptide methionine sulfoxide reductase MsrB (139 aa).

Positions 8–130 (DQEWRQQLTD…NSASLRFHSA (123 aa)) constitute a MsrB domain. Zn(2+) contacts are provided by cysteine 47, cysteine 50, cysteine 96, and cysteine 99. Cysteine 119 (nucleophile) is an active-site residue.

Belongs to the MsrB Met sulfoxide reductase family. The cofactor is Zn(2+).

It carries out the reaction L-methionyl-[protein] + [thioredoxin]-disulfide + H2O = L-methionyl-(R)-S-oxide-[protein] + [thioredoxin]-dithiol. The polypeptide is Peptide methionine sulfoxide reductase MsrB (Hahella chejuensis (strain KCTC 2396)).